The primary structure comprises 753 residues: Polyribonucleotide nucleotidyltransferase (753 aa).

Residues Asp523 and Asp529 each contribute to the Mg(2+) site. A KH domain is found at 589 to 648 (PRIISVRIPVDKIGAVIGPKGAMINQIQDDTGADITIEDDGTVLIGATDGASAEAARSAV). The S1 motif domain maps to 660-732 (GERYLGTVVK…DRGKLSLSPV (73 aa)). The tract at residues 733–753 (GAESDAVAETADAIESSQTEA) is disordered.

It belongs to the polyribonucleotide nucleotidyltransferase family. Mg(2+) is required as a cofactor.

It is found in the cytoplasm. It catalyses the reaction RNA(n+1) + phosphate = RNA(n) + a ribonucleoside 5'-diphosphate. Its function is as follows. Involved in mRNA degradation. Catalyzes the phosphorolysis of single-stranded polyribonucleotides processively in the 3'- to 5'-direction. The sequence is that of Polyribonucleotide nucleotidyltransferase from Micrococcus luteus (strain ATCC 4698 / DSM 20030 / JCM 1464 / CCM 169 / CCUG 5858 / IAM 1056 / NBRC 3333 / NCIMB 9278 / NCTC 2665 / VKM Ac-2230) (Micrococcus lysodeikticus).